A 359-amino-acid polypeptide reads, in one-letter code: tRNA-specific 2-thiouridylase MnmA (359 aa).

ATP-binding positions include 10–17 (GISGGVDS) and L36. Catalysis depends on C101, which acts as the Nucleophile. Cysteines 101 and 197 form a disulfide. An ATP-binding site is contributed by G125. The interval 147-149 (KDQ) is interaction with tRNA. C197 (cysteine persulfide intermediate) is an active-site residue. Residues 306 to 307 (RY) are interaction with tRNA.

It belongs to the MnmA/TRMU family.

The protein resides in the cytoplasm. The catalysed reaction is S-sulfanyl-L-cysteinyl-[protein] + uridine(34) in tRNA + AH2 + ATP = 2-thiouridine(34) in tRNA + L-cysteinyl-[protein] + A + AMP + diphosphate + H(+). Catalyzes the 2-thiolation of uridine at the wobble position (U34) of tRNA, leading to the formation of s(2)U34. In Chlorobium chlorochromatii (strain CaD3), this protein is tRNA-specific 2-thiouridylase MnmA.